Here is a 163-residue protein sequence, read N- to C-terminus: MAKSNKIFTNTLRLLALAATVVAIVFMVTSHDSAQVLNLTFTAKYSNTPAFKFLVIGEAIAGGYTVISILLSFKGLFWRLIVILDMVTTVLLTSSISAALAIAQVGKKGNTHAGWLPICGQVPDFCDYVTIALIAGFAAAIIYFVLLLCSLYVVLSPIFVATP.

Residues 1–6 (MAKSNK) are Cytoplasmic-facing. The chain crosses the membrane as a helical span at residues 7 to 27 (IFTNTLRLLALAATVVAIVFM). Over 28 to 52 (VTSHDSAQVLNLTFTAKYSNTPAFK) the chain is Extracellular. The N-linked (GlcNAc...) asparagine glycan is linked to Asn-38. The chain crosses the membrane as a helical span at residues 53–73 (FLVIGEAIAGGYTVISILLSF). Topologically, residues 74 to 79 (KGLFWR) are cytoplasmic. The chain crosses the membrane as a helical span at residues 80–100 (LIVILDMVTTVLLTSSISAAL). At 101–128 (AIAQVGKKGNTHAGWLPICGQVPDFCDY) the chain is on the extracellular side. A helical membrane pass occupies residues 129–149 (VTIALIAGFAAAIIYFVLLLC). Topologically, residues 150-163 (SLYVVLSPIFVATP) are cytoplasmic.

Belongs to the Casparian strip membrane proteins (CASP) family. In terms of assembly, homodimer and heterodimers.

It localises to the cell membrane. The chain is CASP-like protein 1C2 from Populus trichocarpa (Western balsam poplar).